The primary structure comprises 224 residues: Voltage-dependent calcium channel gamma-1 subunit (224 aa).

The Cytoplasmic portion of the chain corresponds to 1 to 10; it reads MSQTKALKVR. A helical membrane pass occupies residues 11 to 29; it reads VTLFCILVGIVLALVAVVT. At 30–110 the chain is on the extracellular side; sequence DHWAVLSPHV…TQKEYSISAA (81 aa). N-linked (GlcNAc...) asparagine glycosylation is found at N43 and N81. Cysteines 57 and 82 form a disulfide. The chain crosses the membrane as a helical span at residues 111–131; the sequence is AIAIFSLGFIILGTICGLLSF. Residues 132–136 are Cytoplasmic-facing; it reads RKKRD. The chain crosses the membrane as a helical span at residues 137–157; sequence YLLRPASMFYAFAGLCIFVSV. The Extracellular segment spans residues 158–181; it reads EVMRQSVKRMIDSEDTVWIDYYYG. Residues 182–206 form a helical membrane-spanning segment; sequence WSFACACAAFILLFLGGIALLLFSL. The Cytoplasmic segment spans residues 207 to 224; the sequence is PRMPQYPWESCMDAEPEH.

It belongs to the PMP-22/EMP/MP20 family. CACNG subfamily. Component of a calcium channel complex consisting of a pore-forming alpha subunit (CACNA1S) and the ancillary subunits CACNB1 or CACNB2, CACNG1 and CACNA2D1. The channel complex contains alpha, beta, gamma and delta subunits in a 1:1:1:1 ratio, i.e. it contains either CACNB1 or CACNB2. N-glycosylated.

The protein resides in the cell membrane. It is found in the sarcolemma. Its function is as follows. Regulatory subunit of the voltage-gated calcium channel that gives rise to L-type calcium currents in skeletal muscle. Regulates channel inactivation kinetics. The sequence is that of Voltage-dependent calcium channel gamma-1 subunit (CACNG1) from Sus scrofa (Pig).